The sequence spans 611 residues: Calmegin (611 aa).

Positions 1 to 19 (MRFQGVGLCLGLLFITVNA) are cleaved as a signal peptide. Over 20-471 (DFMDDGVEVE…LVIAAEERPW (452 aa)) the chain is Lumenal. Lys-128 carries the N6-acetyllysine modification. A disulfide bridge connects residues Cys-151 and Cys-185. A disordered region spans residues 254–335 (LDDVVPPINP…KAEKPEDWSD (82 aa)). Residues 265-284 (REIDDPSDKKPEEWDDRAKI) show a composition bias toward basic and acidic residues. 8 tandem repeats follow at residues 267-280 (IDDP…EWDD), 284-297 (IPDP…DWDE), 303-316 (IEDS…GWLD), 322-335 (IPNP…DWSD), 339-352 (GEWE…PACQ), 356-369 (GEWK…PKYK), 370-383 (GIWR…PNYQ), and 384-397 (GLWS…PDYF). The tract at residues 317–350 (DEPKFIPNPKAEKPEDWSDDMDGEWEAPHIPNPA) is interaction with PPIB. A disulfide bond links Cys-351 and Cys-355. Residues 472 to 492 (LWLMYLVMAGLPVALVASFCW) traverse the membrane as a helical segment. Topologically, residues 493–611 (PRKVKKKYED…SLRKRRVRKD (119 aa)) are cytoplasmic. The interval 517–611 (AALEQEAEEE…SLRKRRVRKD (95 aa)) is disordered. Basic and acidic residues predominate over residues 526-584 (EKAPEKPEDVQEEKKPGEAEVVTVEKEVIGEPEEKSKEDRETLEGQEEVSKLSKSGSED). Residues Ser-561, Ser-578, Ser-580, Ser-582, Ser-592, Ser-595, and Ser-602 each carry the phosphoserine modification. A compositionally biased stretch (basic residues) spans 602-611 (SLRKRRVRKD).

This sequence belongs to the calreticulin family. In terms of assembly, interacts with PDILT and PPIB. Interacts with ADAM2. Interacts with ADAM1A, ADAM1B and ADAM3; these are protein-coding genes in mouse but may be pseudogenes in other organisms. Detected in testis (at protein level). Detected in testis.

The protein resides in the endoplasmic reticulum membrane. Functionally, functions during spermatogenesis as a chaperone for a range of client proteins that are important for sperm adhesion onto the egg zona pellucida and for subsequent penetration of the zona pellucida. Required for normal sperm migration from the uterus into the oviduct. Required for normal male fertility. Binds calcium ions. The sequence is that of Calmegin (Clgn) from Mus musculus (Mouse).